The chain runs to 585 residues: Auxin response factor 17 (585 aa).

The segment at residues 119 to 221 (FAKILTPSDA…EMFIGVRRTP (103 aa)) is a DNA-binding region (TF-B3). Disordered regions lie at residues 483–517 (EMMNFGSPPSDNLSPNSNTTNLSSGNDLVGNRGPL) and 535–585 (EHSE…SSQG). Residues 488–510 (GSPPSDNLSPNSNTTNLSSGNDL) show a composition bias toward low complexity. Positions 573-585 (KHSNSNAGSSSQG) are enriched in polar residues.

It belongs to the ARF family. As to quaternary structure, homo and heterodimers.

Its subcellular location is the nucleus. In terms of biological role, auxin response factors (ARFs) are transcriptional factors that bind specifically to the DNA sequence 5'-TGTCTC-3' found in the auxin-responsive promoter elements (AuxREs). Could act as transcriptional activator or repressor. Formation of heterodimers with Aux/IAA proteins may alter their ability to modulate early auxin response genes expression. The protein is Auxin response factor 17 (ARF17) of Arabidopsis thaliana (Mouse-ear cress).